A 215-amino-acid chain; its full sequence is Cytochrome b6 (215 aa).

The chain crosses the membrane as a helical span at residues 32–52 (IFYCLGGITLTCFLVQVATGF). Position 35 (cysteine 35) interacts with heme c. Positions 86 and 100 each coordinate heme b. A run of 3 helical transmembrane segments spans residues 90-110 (ASMMVLMMILHVFRVYLTGGF), 116-136 (LTWVTGVILSVITVSFGVTGY), and 186-206 (LHTFVLPLLAAVFMLMHFLMI). Histidine 187 and histidine 202 together coordinate heme b.

The protein belongs to the cytochrome b family. PetB subfamily. As to quaternary structure, the 4 large subunits of the cytochrome b6-f complex are cytochrome b6, subunit IV (17 kDa polypeptide, PetD), cytochrome f and the Rieske protein, while the 4 small subunits are PetG, PetL, PetM and PetN. The complex functions as a dimer. The cofactor is heme b. Heme c is required as a cofactor.

The protein resides in the plastid. Its subcellular location is the chloroplast thylakoid membrane. Its function is as follows. Component of the cytochrome b6-f complex, which mediates electron transfer between photosystem II (PSII) and photosystem I (PSI), cyclic electron flow around PSI, and state transitions. In Ostreococcus tauri, this protein is Cytochrome b6.